The sequence spans 167 residues: Alpha-crystallin A chain (167 aa).

Met-1 is modified (N-acetylmethionine). A sHSP domain is found at 47-158 (YYRQSFFRGF…GERPIPVSRE (112 aa)). Positions 94, 96, 101, and 148 each coordinate Zn(2+). The interval 143-167 (SLDSSHGERPIPVSREEKPTSAPSS) is disordered. A compositionally biased stretch (basic and acidic residues) spans 147–161 (SHGERPIPVSREEKP). Ser-156 carries O-linked (GlcNAc) serine glycosylation.

The protein belongs to the small heat shock protein (HSP20) family. In terms of assembly, heteropolymer composed of three CRYAA and one CRYAB subunits. Inter-subunit bridging via zinc ions enhances stability, which is crucial as there is no protein turn over in the lens. Can also form homodimers and homotetramers (dimers of dimers) which serve as the building blocks of homooligomers. Within homooligomers, the zinc-binding motif is created from residues of 3 different molecules. His-94 and Glu-96 from one molecule are ligands of the zinc ion, and His-101 and His-148 residues from additional molecules complete the site with tetrahedral coordination geometry.

The protein resides in the cytoplasm. It is found in the nucleus. Its function is as follows. Contributes to the transparency and refractive index of the lens. May act as a chaperone, preventing aggregation of various proteins under a wide range of stress conditions. The polypeptide is Alpha-crystallin A chain (CRYAA) (Pelophylax lessonae (Pool frog)).